The chain runs to 523 residues: Polypyrimidine tract-binding protein 3 (523 aa).

Residues 1 to 25 are disordered; the sequence is MNSSTSAGVYANGNDNKKFKGDRPP. RRM domains lie at 30-114, 153-229, and 329-403; these read RVLH…NLPN, LRII…FSKL, and SVLL…LSKH. A Glycyl lysine isopeptide (Lys-Gly) (interchain with G-Cter in SUMO2) cross-link involves residue Lys36. Tyr98 bears the Phosphotyrosine mark. Thr109 bears the Phosphothreonine mark. Lys187 participates in a covalent cross-link: Glycyl lysine isopeptide (Lys-Gly) (interchain with G-Cter in SUMO2). N6-acetyllysine is present on Lys394. The disordered stretch occupies residues 406 to 426; sequence VQLPREGQEDQGLTKDFSNSP. Position 425 is a phosphoserine (Ser425). The RRM 4 domain maps to 446 to 521; sequence ATLHLSNIPP…HHLRVSFSKS (76 aa).

In terms of assembly, interacts with THBS4 (via the acidic amphipathic C-terminus).

Functionally, RNA-binding protein that mediates pre-mRNA alternative splicing regulation. Plays a role in the regulation of cell proliferation, differentiation and migration. Positive regulator of EPO-dependent erythropoiesis. Participates in cell differentiation regulation by repressing tissue-specific exons. Promotes Fas exon 6 skipping. Binds RNA, preferentially to both poly(G) and poly(U). The sequence is that of Polypyrimidine tract-binding protein 3 (Ptbp3) from Mus musculus (Mouse).